A 257-amino-acid polypeptide reads, in one-letter code: 5-oxoprolinase subunit A (257 aa).

It belongs to the LamB/PxpA family. As to quaternary structure, forms a complex composed of PxpA, PxpB and PxpC.

The enzyme catalyses 5-oxo-L-proline + ATP + 2 H2O = L-glutamate + ADP + phosphate + H(+). Catalyzes the cleavage of 5-oxoproline to form L-glutamate coupled to the hydrolysis of ATP to ADP and inorganic phosphate. This Natranaerobius thermophilus (strain ATCC BAA-1301 / DSM 18059 / JW/NM-WN-LF) protein is 5-oxoprolinase subunit A.